An 88-amino-acid chain; its full sequence is Small ribosomal subunit protein bS20 (88 aa).

Residues 1 to 23 form a disordered region; the sequence is MANSPQAKKRARQNDKARAHNAS.

The protein belongs to the bacterial ribosomal protein bS20 family.

In terms of biological role, binds directly to 16S ribosomal RNA. The chain is Small ribosomal subunit protein bS20 from Saccharophagus degradans (strain 2-40 / ATCC 43961 / DSM 17024).